Here is a 510-residue protein sequence, read N- to C-terminus: Histidine ammonia-lyase (510 aa).

The 5-imidazolinone (Ala-Gly) cross-link spans 143–145; sequence ASG. S144 carries the post-translational modification 2,3-didehydroalanine (Ser).

Belongs to the PAL/histidase family. In terms of processing, contains an active site 4-methylidene-imidazol-5-one (MIO), which is formed autocatalytically by cyclization and dehydration of residues Ala-Ser-Gly.

It is found in the cytoplasm. The catalysed reaction is L-histidine = trans-urocanate + NH4(+). It functions in the pathway amino-acid degradation; L-histidine degradation into L-glutamate; N-formimidoyl-L-glutamate from L-histidine: step 1/3. This Shewanella woodyi (strain ATCC 51908 / MS32) protein is Histidine ammonia-lyase.